A 380-amino-acid polypeptide reads, in one-letter code: NF-kappa-B inhibitor-like protein 1 (380 aa).

Residues 1-34 (MSNPSPQVPEEEASTSVCRPKSSMASTSRRQRRE) form a disordered region. ANK repeat units follow at residues 64–93 (GQPP…DPAH) and 97–133 (HGDT…IKNK). Disordered regions lie at residues 131 to 166 (KNKD…EWRQ) and 185 to 293 (GDAS…RGSL). Ser-150 bears the Phosphoserine mark. Residues 237-286 (QQEEEQRLFRERARAKEEELRESRARRAQEALGDREPKPTRAGPREEHPR) are compositionally biased toward basic and acidic residues.

As to quaternary structure, interacts with CACTIN (via N-terminal domain); the interaction occurs in a pro-inflammatory-independent manner.

It is found in the nucleus. Functionally, involved in the regulation of innate immune response. Acts as negative regulator of Toll-like receptor and interferon-regulatory factor (IRF) signaling pathways. Contributes to the negative regulation of transcriptional activation of NF-kappa-B target genes in response to endogenous pro-inflammatory stimuli. This Pan troglodytes (Chimpanzee) protein is NF-kappa-B inhibitor-like protein 1 (NFKBIL1).